A 200-amino-acid chain; its full sequence is Inner membrane-spanning protein YciB (200 aa).

The next 5 helical transmembrane spans lie at 32–52, 56–76, 93–113, 126–146, and 153–173; these read FVATGAFMVAIVAAVIVSYVV, VPLMALVTAVIVLVFGGLTLV, LFAVTLYVGLMLGRSFIAILF, FLTIRWARFFLFMAVLNEVIW, and FWVAFKAFGVIPLTAVFAMTQ.

This sequence belongs to the YciB family.

It localises to the cell inner membrane. Its function is as follows. Plays a role in cell envelope biogenesis, maintenance of cell envelope integrity and membrane homeostasis. The protein is Inner membrane-spanning protein YciB of Afipia carboxidovorans (strain ATCC 49405 / DSM 1227 / KCTC 32145 / OM5) (Oligotropha carboxidovorans).